The chain runs to 99 residues: Large ribosomal subunit protein bL27 (99 aa).

The propeptide occupies 1–10 (MKLIFDIQLF).

The protein belongs to the bacterial ribosomal protein bL27 family. Post-translationally, the N-terminus is cleaved by ribosomal processing cysteine protease Prp.

This chain is Large ribosomal subunit protein bL27, found in Caldicellulosiruptor bescii (strain ATCC BAA-1888 / DSM 6725 / KCTC 15123 / Z-1320) (Anaerocellum thermophilum).